The following is a 134-amino-acid chain: ATP synthase epsilon chain (134 aa).

The tract at residues 100-134 (NQKLQNENLSEEEKEHYEKQRSRSQALLNLASAKV) is disordered. Basic and acidic residues predominate over residues 110–120 (EEEKEHYEKQR).

Belongs to the ATPase epsilon chain family. F-type ATPases have 2 components, CF(1) - the catalytic core - and CF(0) - the membrane proton channel. CF(1) has five subunits: alpha(3), beta(3), gamma(1), delta(1), epsilon(1). CF(0) has three main subunits: a, b and c.

It is found in the cell inner membrane. Its function is as follows. Produces ATP from ADP in the presence of a proton gradient across the membrane. This chain is ATP synthase epsilon chain, found in Sulfurihydrogenibium sp. (strain YO3AOP1).